The chain runs to 191 residues: Large ribosomal subunit protein bL9 (191 aa).

The disordered stretch occupies residues 151 to 191 (AERQAKGESLTSADAIYGVDEDALKPEDFFNPEAEIESEEE).

Belongs to the bacterial ribosomal protein bL9 family.

Binds to the 23S rRNA. This chain is Large ribosomal subunit protein bL9, found in Sinorhizobium medicae (strain WSM419) (Ensifer medicae).